Here is an 815-residue protein sequence, read N- to C-terminus: SNF1 protein kinase subunit beta-1 (815 aa).

Residues 1 to 11 show a composition bias toward polar residues; that stretch reads MGNSPSTQDPS. Disordered stretches follow at residues 1–88 and 117–148; these read MGNS…TIDK and SDDH…KQTK. Gly-2 carries the N-myristoyl glycine lipid modification. Positions 12–31 are enriched in basic and acidic residues; the sequence is HSTKKEHGHHFHDAFNKDRQ. A compositionally biased stretch (polar residues) spans 32–42; sequence GSITSQLFNNR. Ser-33 carries the phosphoserine modification. Basic and acidic residues-rich tracts occupy residues 72–88 and 117–129; these read PSTD…TIDK and SDDH…EEQV. Phosphoserine is present on residues Ser-181, Ser-198, Ser-200, Ser-206, Ser-209, and Ser-220. Disordered stretches follow at residues 310–335, 363–389, and 410–444; these read SHAN…NDDF, HQNK…FASL, and PLHP…SSIS. Positions 313-326 are enriched in low complexity; it reads NNNGNIENNTRNKG. Residue Ser-331 is modified to Phosphoserine. Residues 363–376 are compositionally biased toward basic residues; the sequence is HQNKTKKAQNKKIR. 2 stretches are compositionally biased toward low complexity: residues 377 to 389 and 433 to 444; these read SASN…FASL and HSNSMSSMSSIS. Residues 473-716 are kinase-interacting sequence (KIS); required for interaction with SNF1; that stretch reads VSTDIASALK…LQQGGNIDAE (244 aa). Residues Ser-494 and Ser-497 each carry the phosphoserine modification. The interval 583 to 616 is disordered; the sequence is TLDEELPKRPELKRFPSSSRKSSYYSAKGVERPS. Basic and acidic residues predominate over residues 587-596; sequence ELPKRPELKR. Positions 599-608 are enriched in low complexity; that stretch reads SSSRKSSYYS. Ser-643 carries the post-translational modification Phosphoserine. The segment at 724–804 is association with SNF1 kinase complex (ASC) domain; required for interaction with SNF4; that stretch reads SRYPVPDLPI…FITQVVYAPC (81 aa).

It belongs to the 5'-AMP-activated protein kinase beta subunit family. Component of the SNF1 kinase complex, a heterotrimeric complex composed of the catalytic alpha subunit SNF1, one of the three related beta subunits SIP1, SIP2 or GAL83, and the regulatory gamma subunit SNF4. The beta subunit serves as a bridge between the catalytic and the regulatory subunit. Interacts (via KIS domain) with SNF1. Interacts (via ASC domain) with SNF4. Phosphorylated by SNF1 in vitro.

The protein localises to the cytoplasm. It is found in the vacuole membrane. Beta subunit of the SNF1 kinase complex, which is required for transcriptional, metabolic, and developmental adaptations in response to glucose limitation. Has a structural role, mediating heterotrimer formation, and a regulatory role, defining carbon source-regulated subcellular location and substrate specificity of the SNF1 kinase complex. Promotes the PKA-regulated relocalization of the SNF1 kinase complex to the vacuolar membrane in response to various types of carbon stress. In Saccharomyces cerevisiae (strain YJM789) (Baker's yeast), this protein is SNF1 protein kinase subunit beta-1 (SIP1).